A 283-amino-acid polypeptide reads, in one-letter code: Non-selective voltage-gated ion channel VDAC3 (283 aa).

Residue C2 is modified to N-acetylcysteine. Residue T4 is modified to Phosphothreonine. K12, K15, and K20 each carry N6-acetyllysine. Beta stranded transmembrane passes span 26 to 35 (MVKIDLKTKS) and 39 to 47 (VEFSTSGHA). A Phosphothreonine modification is found at T33. Residue K53 forms a Glycyl lysine isopeptide (Lys-Gly) (interchain with G-Cter in ubiquitin) linkage. Beta stranded transmembrane passes span 54–64 (ASGNLETKYKV), 69–76 (LIFTQKWN), and 80–89 (TLGTEISWEN). N6-acetyllysine is present on K90. Residues 95–104 (LKLTVDTIFV) traverse the membrane as a beta stranded segment. Residues K109 and K110 each participate in a glycyl lysine isopeptide (Lys-Gly) (interchain with G-Cter in ubiquitin) cross-link. 10 beta stranded membrane-spanning segments follow: residues 111-120 (SGKLKASYRR), 123-130 (FSVGSKVD), 137-145 (TIYGWAVLA), 150-158 (LAGYQMSFD), 163-175 (KLCQ…GYKA), 178-185 (FQLHTHVN), 189-198 (EFGGSIYQRV), 202-211 (IETSINLAWT), 218-227 (RFGIAAKYRL), and 231-238 (TSLSAKVN). S241 is modified (phosphoserine). NAD(+) is bound by residues 242 to 244 (LIG) and 260 to 264 (SALVD). Transmembrane regions (beta stranded) follow at residues 242–251 (LIGLGYTQSL) and 254–263 (GVKLTLSALV). Residue K266 is modified to N6-acetyllysine; alternate. K266 is covalently cross-linked (Glycyl lysine isopeptide (Lys-Gly) (interchain with G-Cter in ubiquitin); alternate). A beta stranded transmembrane segment spans residues 273 to 282 (HKVGLGFELE).

This sequence belongs to the eukaryotic mitochondrial porin family. Interacts with ARMC12 in a TBC1D21-dependent manner. Interacts with MISFA. Ubiquitinated by PRKN during mitophagy, leading to its degradation and enhancement of mitophagy. Deubiquitinated by USP30. In terms of tissue distribution, isoform 1 is widely expressed with strong expression in atrium and ascitic tumor, lower levels in brain and very low levels in liver and kidney. Isoform 2 is also widely expressed with highest levels in brain but no expression in kidney. Also expressed in flagella of epididymal sperm.

The protein localises to the mitochondrion outer membrane. The protein resides in the membrane. It catalyses the reaction chloride(in) = chloride(out). It carries out the reaction K(+)(in) = K(+)(out). Its function is as follows. Non-selective voltage-gated ion channel that mediates the transport of anions and cations through the mitochondrion outer membrane and plasma membrane. Forms a high-conducting channel with a stable open state and a voltage-induced closure with a mild preference for anions over cations. Involved in male fertility and sperm mitochondrial sheath formation. The protein is Non-selective voltage-gated ion channel VDAC3 of Rattus norvegicus (Rat).